A 642-amino-acid chain; its full sequence is Threonine--tRNA ligase (642 aa).

Positions 1–61 (MPVITLPDGS…ESDAQLAIIT (61 aa)) constitute a TGS domain. Residues 243-534 (DHRKIGKQLD…LTEEYAGFFP (292 aa)) are catalytic. The Zn(2+) site is built by Cys-334, His-385, and His-511.

It belongs to the class-II aminoacyl-tRNA synthetase family. As to quaternary structure, homodimer. Zn(2+) serves as cofactor.

Its subcellular location is the cytoplasm. The catalysed reaction is tRNA(Thr) + L-threonine + ATP = L-threonyl-tRNA(Thr) + AMP + diphosphate + H(+). Its function is as follows. Catalyzes the attachment of threonine to tRNA(Thr) in a two-step reaction: L-threonine is first activated by ATP to form Thr-AMP and then transferred to the acceptor end of tRNA(Thr). Also edits incorrectly charged L-seryl-tRNA(Thr). In Yersinia enterocolitica serotype O:8 / biotype 1B (strain NCTC 13174 / 8081), this protein is Threonine--tRNA ligase.